Here is a 144-residue protein sequence, read N- to C-terminus: Bacilliredoxin BCE_2233 (144 aa).

This sequence belongs to the bacilliredoxin family.

This is Bacilliredoxin BCE_2233 from Bacillus cereus (strain ATCC 10987 / NRS 248).